The primary structure comprises 346 residues: [LysW]-lysine/[LysW]-ornithine hydrolase (346 aa).

A Zn(2+)-binding site is contributed by H68. D70 is an active-site residue. D92 provides a ligand contact to Zn(2+). E122 functions as the Proton acceptor in the catalytic mechanism. Residues E123, E146, and H317 each contribute to the Zn(2+) site.

This sequence belongs to the peptidase M20A family. LysK subfamily. Zn(2+) is required as a cofactor. Requires Co(2+) as cofactor.

Its subcellular location is the cytoplasm. The catalysed reaction is [amino-group carrier protein]-C-terminal-gamma-(L-lysyl)-L-glutamate + H2O = [amino-group carrier protein]-C-terminal-L-glutamate + L-lysine. It carries out the reaction [amino-group carrier protein]-C-terminal-gamma-(L-ornithyl)-L-glutamate + H2O = [amino-group carrier protein]-C-terminal-L-glutamate + L-ornithine. It participates in amino-acid biosynthesis; L-lysine biosynthesis via AAA pathway; L-lysine from L-alpha-aminoadipate (Thermus route): step 5/5. It functions in the pathway amino-acid biosynthesis; L-arginine biosynthesis. In terms of biological role, catalyzes the release of L-lysine from [LysW]-gamma-L-lysine and the release of L-ornithine from [LysW]-L-ornithine. The protein is [LysW]-lysine/[LysW]-ornithine hydrolase of Saccharolobus islandicus (strain M.16.4 / Kamchatka #3) (Sulfolobus islandicus).